The sequence spans 313 residues: Ribosomal RNA small subunit methyltransferase H (313 aa).

S-adenosyl-L-methionine is bound by residues 34 to 36 (GGH), D53, F80, D101, and Q108.

The protein belongs to the methyltransferase superfamily. RsmH family.

It localises to the cytoplasm. It catalyses the reaction cytidine(1402) in 16S rRNA + S-adenosyl-L-methionine = N(4)-methylcytidine(1402) in 16S rRNA + S-adenosyl-L-homocysteine + H(+). Functionally, specifically methylates the N4 position of cytidine in position 1402 (C1402) of 16S rRNA. This is Ribosomal RNA small subunit methyltransferase H from Lacticaseibacillus paracasei (strain ATCC 334 / BCRC 17002 / CCUG 31169 / CIP 107868 / KCTC 3260 / NRRL B-441) (Lactobacillus paracasei).